The chain runs to 375 residues: Hemolysin BL-binding component (375 aa).

A signal peptide spans 1 to 31; the sequence is MIKKIPYKLLAVSTLLTITTANVVSPVATFA. Residues 232-252 form a helical membrane-spanning segment; sequence FNVMKGAILGLPIIGGIIVGV.

In terms of assembly, composed of a binding component, B, and two lytic components, L1 and L2. All three subunits act synergically to cause hemolysis.

It localises to the secreted. The protein localises to the host cell membrane. Its function is as follows. Cytotoxic protein, part of the enterotoxin complex. Responsible for binding to erythrocytes. This enterotoxin is thought to be the cause of the diarrheal form of gastroenteritis caused by food-borne strains of B.cereus. This is Hemolysin BL-binding component (hblA) from Bacillus cereus.